The sequence spans 430 residues: Glutamyl-tRNA reductase 1 (430 aa).

Substrate-binding positions include 49–52, serine 109, 114–116, and glutamine 120; these read TCNR and EGQ. The active-site Nucleophile is cysteine 50. 189 to 194 contacts NADP(+); that stretch reads GAGSMA.

The protein belongs to the glutamyl-tRNA reductase family. As to quaternary structure, homodimer.

It carries out the reaction (S)-4-amino-5-oxopentanoate + tRNA(Glu) + NADP(+) = L-glutamyl-tRNA(Glu) + NADPH + H(+). The protein operates within porphyrin-containing compound metabolism; protoporphyrin-IX biosynthesis; 5-aminolevulinate from L-glutamyl-tRNA(Glu): step 1/2. Catalyzes the NADPH-dependent reduction of glutamyl-tRNA(Glu) to glutamate 1-semialdehyde (GSA). In Nocardioides sp. (strain ATCC BAA-499 / JS614), this protein is Glutamyl-tRNA reductase 1.